A 138-amino-acid polypeptide reads, in one-letter code: Rubber elongation factor protein (138 aa).

Alanine 2 carries the post-translational modification N-acetylalanine.

Belongs to the REF/SRPP family. In terms of assembly, in solution, able to form amyloid fibers and aggregates rich in beta-sheets. Interaction with membrane stabilizes the protein, inhibiting the amyloid state and aggregation. Not glycosylated. As to expression, localized in all laticifer layers.

The protein localises to the cytoplasm. Functionally, may be part of the rubber biosynthesis machinery. Plays a role in rubber elongation. The sequence is that of Rubber elongation factor protein from Hevea brasiliensis (Para rubber tree).